The following is a 434-amino-acid chain: Glutamate-1-semialdehyde 2,1-aminomutase 2 (434 aa).

At Lys-269 the chain carries N6-(pyridoxal phosphate)lysine.

The protein belongs to the class-III pyridoxal-phosphate-dependent aminotransferase family. HemL subfamily. In terms of assembly, homodimer. Pyridoxal 5'-phosphate serves as cofactor.

The protein resides in the cytoplasm. The catalysed reaction is (S)-4-amino-5-oxopentanoate = 5-aminolevulinate. It functions in the pathway porphyrin-containing compound metabolism; protoporphyrin-IX biosynthesis; 5-aminolevulinate from L-glutamyl-tRNA(Glu): step 2/2. The protein is Glutamate-1-semialdehyde 2,1-aminomutase 2 of Exiguobacterium sp. (strain ATCC BAA-1283 / AT1b).